A 216-amino-acid polypeptide reads, in one-letter code: Fibroblast growth factor 17 (216 aa).

An N-terminal signal peptide occupies residues 1–22 (MGAARLLPNLTLCLQLLILCCQ). N-linked (GlcNAc...) asparagine glycosylation is present at Asn-137. Residues 190–216 (EKQKQFEFVGSAPTRRTKRTRRPQPLT) form a disordered region. A compositionally biased stretch (basic residues) spans 204-216 (RRTKRTRRPQPLT).

This sequence belongs to the heparin-binding growth factors family. Interacts with FGFR3 and FGFR4. Preferentially expressed in the embryonic brain.

Its subcellular location is the secreted. Functionally, plays an important role in the regulation of embryonic development and as signaling molecule in the induction and patterning of the embryonic brain. Required for normal brain development. In Homo sapiens (Human), this protein is Fibroblast growth factor 17 (FGF17).